A 303-amino-acid chain; its full sequence is 2-dehydropantoate 2-reductase (303 aa).

NADP(+) contacts are provided by residues 7-12 (GCGALG), Asn98, and Ala122. Asn98 is a binding site for substrate. The active-site Proton donor is the Lys176. Residues Asn180, Asn184, Asn194, and Ser244 each contribute to the substrate site. An NADP(+)-binding site is contributed by Glu256.

Belongs to the ketopantoate reductase family. As to quaternary structure, monomer.

It is found in the cytoplasm. The catalysed reaction is (R)-pantoate + NADP(+) = 2-dehydropantoate + NADPH + H(+). It participates in cofactor biosynthesis; (R)-pantothenate biosynthesis; (R)-pantoate from 3-methyl-2-oxobutanoate: step 2/2. Its function is as follows. Catalyzes the NADPH-dependent reduction of ketopantoate into pantoic acid. Has a strong preference for NADPH over NADH as the electron acceptor. Pantoate, ketoisovalerate, oxaloacetate, pyruvate, 3-hydroxypyruvate, alpha-ketoglutarate, alpha-ketobutyrate, and acetaldehyde cannot serve as substrates for reduction. The protein is 2-dehydropantoate 2-reductase of Salmonella typhimurium (strain LT2 / SGSC1412 / ATCC 700720).